The primary structure comprises 150 residues: Protein adenylyltransferase MntA (150 aa).

Positions 32–46 match the GSX(10)DXD motif motif; it reads GSRATGNINANSDWD. Catalysis depends on residues aspartate 44 and aspartate 46. Mg(2+)-binding residues include aspartate 44, aspartate 46, and aspartate 86.

It belongs to the MntA antitoxin family. In terms of assembly, forms a complex with HepT, probably MntA(1):HepT(2) in vivo; can only be purified when both 'Arg-102' and 'Tyr-109' (or 'His-107' and 'Tyr-109') of HepThave been mutated. The fully di-AMPylated HepT homodimer is not found in a complex with MntA. Mg(2+) is required as a cofactor.

It catalyses the reaction L-tyrosyl-[protein] + ATP = O-(5'-adenylyl)-L-tyrosyl-[protein] + diphosphate. It carries out the reaction O-(5'-adenylyl)-L-tyrosyl-[protein] + ATP = O-[5'-(adenylyl-(5'-&gt;3')-adenylyl)]-L-tyrosyl-[protein] + diphosphate. Antitoxin component of a type VII toxin-antitoxin (TA) system. Upon cloning in E.coli neutralizes the effect of cognate toxin HepT. Neutralization is mostly due to di-AMPylation of toxin by this enzyme. Successively di-AMPylates HepT on 'Tyr-109'. In vitro will use ATP, dATP, GTP, dGTP, TTP or UTP to generate a mono-modified protein, but requires a purine nucleotide for the second modification reaction (ATP, dATP or GTP). The chain is Protein adenylyltransferase MntA from Aphanizomenon flos-aquae (strain 2012/KM1/D3).